The sequence spans 320 residues: Stress-involved WYL domain-containing regulator (320 aa).

An HTH deoR-type domain is found at 7–65 (TTGRVVQLLGLLQSRRVWTGEELAERLGVTGRSVRRDIERLRELGYPVHASKGQGGGYQ). A DNA-binding region (H-T-H motif) is located at residues 24 to 43 (WTGEELAERLGVTGRSVRRD). Residues 139–218 (DTAVAPDVLM…SDVRATGTTF (80 aa)) enclose the WYL domain. The segment at 245 to 320 (VRYFAPEKVV…MADRLRRAVR (76 aa)) is WCX domain.

Homodimer.

Its function is as follows. Transcriptional activator. Acts as a transcriptional activator of the MSMEG_1357-56 operon upon genotoxic stress. Controls adjacent genes that belong to the DinB/YfiT-like putative metalloenzymes superfamily by upregulating their expression in response to various genotoxic stress conditions, including exposure to H(2)O(2) or the natural antibiotic zeocin, as well as mitomycin C (MMC), diamide and UVC radiation. Upon genotoxic stress, upregulates two genes encoding proteins of the DinB/YfiT-like putative metalloenzymes superfamily, MSMEG_1357 and MSMEG_1356. Binds different forms of single-stranded DNA (ssDNA) with high affinity, primarily through its characteristic WYL domain. Binds nucleic acids with single-stranded regions, such as polyT 20mer ssDNA, 5' tailed, 3' tailed and fork DNA, but not ssRNA. This is Stress-involved WYL domain-containing regulator from Mycolicibacterium smegmatis (strain ATCC 700084 / mc(2)155) (Mycobacterium smegmatis).